A 49-amino-acid polypeptide reads, in one-letter code: Large ribosomal subunit protein bL33 (49 aa).

It belongs to the bacterial ribosomal protein bL33 family.

This is Large ribosomal subunit protein bL33 from Syntrophus aciditrophicus (strain SB).